The chain runs to 298 residues: Thymidylate synthase (298 aa).

DUMP contacts are provided by residues R25 and 159–160 (RR). The active-site Nucleophile is the C179. DUMP is bound by residues 200-203 (RSVD), N211, and 241-243 (HLY). D203 contacts (6R)-5,10-methylene-5,6,7,8-tetrahydrofolate. A297 is a (6R)-5,10-methylene-5,6,7,8-tetrahydrofolate binding site.

It belongs to the thymidylate synthase family. Bacterial-type ThyA subfamily. In terms of assembly, homodimer.

The protein resides in the cytoplasm. The catalysed reaction is dUMP + (6R)-5,10-methylene-5,6,7,8-tetrahydrofolate = 7,8-dihydrofolate + dTMP. The protein operates within pyrimidine metabolism; dTTP biosynthesis. Catalyzes the reductive methylation of 2'-deoxyuridine-5'-monophosphate (dUMP) to 2'-deoxythymidine-5'-monophosphate (dTMP) while utilizing 5,10-methylenetetrahydrofolate (mTHF) as the methyl donor and reductant in the reaction, yielding dihydrofolate (DHF) as a by-product. This enzymatic reaction provides an intracellular de novo source of dTMP, an essential precursor for DNA biosynthesis. The chain is Thymidylate synthase from Cereibacter sphaeroides (strain ATCC 17029 / ATH 2.4.9) (Rhodobacter sphaeroides).